Reading from the N-terminus, the 382-residue chain is Histone acetyltransferase type B subunit 2 (382 aa).

WD repeat units follow at residues Glu-98–His-138, Pro-141–Lys-181, Ile-184–Gln-224, Glu-228–Gly-268, and Gly-275–Gln-315. An interaction with the histone H4 N-terminus region spans residues Glu-317–Asp-321. The stretch at Gly-332–Glu-372 is one WD 6 repeat.

The protein belongs to the WD repeat RBAP46/RBAP48/MSI1 family. As to quaternary structure, component of the HAT-B complex composed of at least HAT1 and HAT2. The HAT-B complex binds to histone H4 tail.

It localises to the cytoplasm. Its subcellular location is the nucleus. Regulatory subunit of the histone acetylase B (HAT-B) complex. The complex acetylates 'Lys-14' of histone H4 which is required for telomeric silencing. This is Histone acetyltransferase type B subunit 2 (HAT2) from Candida albicans (strain SC5314 / ATCC MYA-2876) (Yeast).